The chain runs to 907 residues: Valine--tRNA ligase (907 aa).

The 'HIGH' region motif lies at 45–55 (PNVTGSLHMGH). The 'KMSKS' region signature appears at 554–558 (KMSKS). Lysine 557 serves as a coordination point for ATP. A coiled-coil region spans residues 838–870 (GQLIDLEAERARLMKDVSKIEQDIEKLSAKLSN).

Belongs to the class-I aminoacyl-tRNA synthetase family. ValS type 1 subfamily. As to quaternary structure, monomer.

The protein resides in the cytoplasm. The enzyme catalyses tRNA(Val) + L-valine + ATP = L-valyl-tRNA(Val) + AMP + diphosphate. Functionally, catalyzes the attachment of valine to tRNA(Val). As ValRS can inadvertently accommodate and process structurally similar amino acids such as threonine, to avoid such errors, it has a 'posttransfer' editing activity that hydrolyzes mischarged Thr-tRNA(Val) in a tRNA-dependent manner. The chain is Valine--tRNA ligase from Bartonella henselae (strain ATCC 49882 / DSM 28221 / CCUG 30454 / Houston 1) (Rochalimaea henselae).